The chain runs to 77 residues: uncharacterized protein (77 aa).

This is an uncharacterized protein from Plasmodium falciparum (isolate fcm17 / Senegal).